Consider the following 286-residue polypeptide: uncharacterized protein (286 aa).

Disordered regions lie at residues 59–89 (PESA…PGAK) and 225–286 (RQRK…EDTR). Residues 69-85 (AEAESAGTAAATESHGA) show a composition bias toward low complexity.

This is an uncharacterized protein from Mus musculus (Mouse).